Reading from the N-terminus, the 112-residue chain is Nitrogenase iron-iron protein delta chain (112 aa).

As to quaternary structure, hexamer of two alpha, two beta, and two delta chains. Iron-sulfur cluster is required as a cofactor.

The catalysed reaction is N2 + 8 reduced [2Fe-2S]-[ferredoxin] + 16 ATP + 16 H2O = H2 + 8 oxidized [2Fe-2S]-[ferredoxin] + 2 NH4(+) + 16 ADP + 16 phosphate + 6 H(+). In terms of biological role, the key enzymatic reactions in nitrogen fixation are catalyzed by the nitrogenase complex, which has 2 components: the iron protein (component 2) and a component 1 which is either a molybdenum-iron protein, a vanadium-iron, or an iron-iron protein. This chain is Nitrogenase iron-iron protein delta chain (anfG), found in Azomonas macrocytogenes (Azotobacter macrocytogenes).